The primary structure comprises 432 residues: Adenylosuccinate synthetase (432 aa).

Residues 13 to 19 (GDEGKGK) and 41 to 43 (GHT) contribute to the GTP site. Asp14 (proton acceptor) is an active-site residue. Mg(2+) contacts are provided by Asp14 and Gly41. IMP contacts are provided by residues 14–17 (DEGK), 39–42 (NAGH), Thr130, Arg144, Gln225, Thr240, and Arg304. His42 acts as the Proton donor in catalysis. A substrate-binding site is contributed by 300–306 (ATTGRRR). Residues Arg306, 332-334 (KLD), and 415-417 (STG) contribute to the GTP site.

Belongs to the adenylosuccinate synthetase family. As to quaternary structure, homodimer. Mg(2+) is required as a cofactor.

It localises to the cytoplasm. It carries out the reaction IMP + L-aspartate + GTP = N(6)-(1,2-dicarboxyethyl)-AMP + GDP + phosphate + 2 H(+). Its pathway is purine metabolism; AMP biosynthesis via de novo pathway; AMP from IMP: step 1/2. Plays an important role in the de novo pathway of purine nucleotide biosynthesis. Catalyzes the first committed step in the biosynthesis of AMP from IMP. The sequence is that of Adenylosuccinate synthetase from Serratia proteamaculans (strain 568).